A 290-amino-acid chain; its full sequence is ATP synthase gamma chain (290 aa).

It belongs to the ATPase gamma chain family. In terms of assembly, F-type ATPases have 2 components, CF(1) - the catalytic core - and CF(0) - the membrane proton channel. CF(1) has five subunits: alpha(3), beta(3), gamma(1), delta(1), epsilon(1). CF(0) has three main subunits: a, b and c.

The protein localises to the cell inner membrane. Functionally, produces ATP from ADP in the presence of a proton gradient across the membrane. The gamma chain is believed to be important in regulating ATPase activity and the flow of protons through the CF(0) complex. This is ATP synthase gamma chain from Anaeromyxobacter sp. (strain K).